A 643-amino-acid chain; its full sequence is Phosphomethylpyrimidine synthase (643 aa).

Residues Asn248, Met277, Tyr306, His342, 362 to 364, 403 to 406, and Glu442 contribute to the substrate site; these read SRG and DGLR. Residue His446 coordinates Zn(2+). Position 469 (Tyr469) interacts with substrate. His510 lines the Zn(2+) pocket. Positions 590, 593, and 598 each coordinate [4Fe-4S] cluster.

Belongs to the ThiC family. As to quaternary structure, homodimer. The cofactor is [4Fe-4S] cluster.

It carries out the reaction 5-amino-1-(5-phospho-beta-D-ribosyl)imidazole + S-adenosyl-L-methionine = 4-amino-2-methyl-5-(phosphooxymethyl)pyrimidine + CO + 5'-deoxyadenosine + formate + L-methionine + 3 H(+). Its pathway is cofactor biosynthesis; thiamine diphosphate biosynthesis. Functionally, catalyzes the synthesis of the hydroxymethylpyrimidine phosphate (HMP-P) moiety of thiamine from aminoimidazole ribotide (AIR) in a radical S-adenosyl-L-methionine (SAM)-dependent reaction. The chain is Phosphomethylpyrimidine synthase from Paraburkholderia xenovorans (strain LB400).